Reading from the N-terminus, the 834-residue chain is Translation factor GUF1 homolog, mitochondrial (834 aa).

The N-terminal 66 residues, 1-66 (MKLCGVRGSG…RPLLAEPRRY (66 aa)), are a transit peptide targeting the mitochondrion. Residues 129–314 (ACIRNVSVVA…QIIDKVPPPR (186 aa)) form the tr-type G domain. Residues 138-145 (AHVDHGKT), 205-209 (DTPGH), and 259-262 (TKMD) each bind GTP. A disordered region spans residues 475 to 507 (ATGPPETASRTKPATAAETASSDDASGSSGSSV). Residues 488–507 (ATAAETASSDDASGSSGSSV) show a composition bias toward low complexity.

It belongs to the TRAFAC class translation factor GTPase superfamily. Classic translation factor GTPase family. LepA subfamily.

The protein resides in the mitochondrion inner membrane. The catalysed reaction is GTP + H2O = GDP + phosphate + H(+). Its function is as follows. Promotes mitochondrial protein synthesis. May act as a fidelity factor of the translation reaction, by catalyzing a one-codon backward translocation of tRNAs on improperly translocated ribosomes. Binds to mitochondrial ribosomes in a GTP-dependent manner. The sequence is that of Translation factor GUF1 homolog, mitochondrial from Leishmania major.